We begin with the raw amino-acid sequence, 616 residues long: KIF-binding protein (616 aa).

Positions 52–78 (EEEEESEAEGKEERRDGPESGGRRGES) are disordered. The segment covering 59 to 78 (AEGKEERRDGPESGGRRGES) has biased composition (basic and acidic residues).

It belongs to the KIF-binding protein family.

Its subcellular location is the cytoplasm. The protein resides in the cytoskeleton. In terms of biological role, activator of KIF1B plus-end-directed microtubule motor activity. Required for organization of axonal microtubules, and axonal outgrowth and maintenance during peripheral and central nervous system development. This Xenopus tropicalis (Western clawed frog) protein is KIF-binding protein.